The sequence spans 129 residues: Small ribosomal subunit protein bS18c (129 aa).

Residues 1 to 20 (MGTSNTQKPQKQVPKRKKYK) form a disordered region.

Belongs to the bacterial ribosomal protein bS18 family. As to quaternary structure, part of the 30S ribosomal subunit.

It is found in the plastid. The protein localises to the chloroplast. This is Small ribosomal subunit protein bS18c from Stigeoclonium helveticum (Green alga).